Consider the following 557-residue polypeptide: Probable protein kinase UbiB (557 aa).

Residues 121–509 (AFDTTPLASA…RKLQTRVVTA (389 aa)) form the Protein kinase domain. Residues 127–135 (LASASIAQV) and lysine 154 contribute to the ATP site. Aspartate 289 acts as the Proton acceptor in catalysis. A run of 2 helical transmembrane segments spans residues 506 to 526 (VVTAITGSGLLVVAAVLYGLH) and 535 to 555 (VPVWSWISGGAGSAALLIAWL).

The protein belongs to the ABC1 family. UbiB subfamily.

It is found in the cell inner membrane. The protein operates within cofactor biosynthesis; ubiquinone biosynthesis [regulation]. Its function is as follows. Is probably a protein kinase regulator of UbiI activity which is involved in aerobic coenzyme Q (ubiquinone) biosynthesis. The sequence is that of Probable protein kinase UbiB from Xanthomonas campestris pv. campestris (strain 8004).